A 145-amino-acid chain; its full sequence is uncharacterized protein (145 aa).

Positions 1–18 (MAEQQPSKEEKKEDKKDE) are enriched in basic and acidic residues. The interval 1 to 61 (MAEQQPSKEE…CTEGEWDASD (61 aa)) is disordered.

This is an uncharacterized protein from Caenorhabditis elegans.